The sequence spans 511 residues: MKKADILVLDFGSQYTQLIARRLREQGVYAEILPFNVSLDEIKAKEPKGIILSGGPASVYANDAYFCDKGVFDLNIPVLGICYGMQLMAHHFGANVAPAGHKEYGKATIDIQNDSDLFKNLPKKQTVWMSHSDKVENLPQGFEVLATSENSPFCVFGDEKRKFFALQFHPEVQHSEFGKSILKNFAKYACNCDSVWNMGSFAKTQAQKIKEEVGNDKVLCAVSGGVDSSVVAALLASAIKDQVVVVFVDNGLLRSGEKEQVEYMFKHTLGIDLISIDAREIFLSRLAGVRDPEQKRKIIGNTFIEVFEEEAKKHKDVKYLAQGTLYTDIIESSVVGASKTIKSHHNVGGLPEKMNLKLIEPLKEIFKDEVRALGMELGLSKDVVYRHPFPGPGLAIRIMGEVNEPSLELLRKADVILIEELKSSGWYDKTWQAFCVLLNVQSVGVMGDNRTYDNAVCVRVVNASDGMTATFSHLPYELLENISRRIINEVNGINRVVYDISSKPPATIEWE.

The Glutamine amidotransferase type-1 domain occupies 5–195 (DILVLDFGSQ…AKYACNCDSV (191 aa)). The active-site Nucleophile is the cysteine 82. Catalysis depends on residues histidine 169 and glutamate 171. The 191-residue stretch at 196–386 (WNMGSFAKTQ…LGLSKDVVYR (191 aa)) folds into the GMPS ATP-PPase domain. An ATP-binding site is contributed by 223–229 (SGGVDSS).

As to quaternary structure, homodimer.

It carries out the reaction XMP + L-glutamine + ATP + H2O = GMP + L-glutamate + AMP + diphosphate + 2 H(+). It participates in purine metabolism; GMP biosynthesis; GMP from XMP (L-Gln route): step 1/1. Functionally, catalyzes the synthesis of GMP from XMP. This Campylobacter lari (strain RM2100 / D67 / ATCC BAA-1060) protein is GMP synthase [glutamine-hydrolyzing].